We begin with the raw amino-acid sequence, 228 residues long: uncharacterized protein (228 aa).

Disordered regions lie at residues 1-62 and 160-228; these read MQRP…VGRF and SPRP…LSGV. Over residues 13–33 the composition is skewed to low complexity; the sequence is AASTRAPPRPSAPQQGRRQPS. Polar residues predominate over residues 167–176; that stretch reads RGQQVTQDGP.

This is an uncharacterized protein from Homo sapiens (Human).